Here is a 513-residue protein sequence, read N- to C-terminus: Protein disulfide-isomerase 2 (513 aa).

Positions 1 to 20 are cleaved as a signal peptide; that stretch reads MNKFLALLFVLALFANIAFS. 2 Thioredoxin domains span residues 21-147 and 355-486; these read CEGH…EELK and DVIG…DNAA. Catalysis depends on nucleophile residues C70, C73, C406, and C409. Intrachain disulfides connect C70/C73 and C406/C409. A disordered region spans residues 491 to 513; it reads LPSSQTDDNVESKKDSSAKHDEL. Residues 500-513 are compositionally biased toward basic and acidic residues; it reads VESKKDSSAKHDEL. A Prevents secretion from ER motif is present at residues 510 to 513; sequence HDEL.

It belongs to the protein disulfide isomerase family.

The protein localises to the endoplasmic reticulum lumen. It carries out the reaction Catalyzes the rearrangement of -S-S- bonds in proteins.. Its function is as follows. Participates in the folding of proteins containing disulfide bonds, may be involved in glycosylation, prolyl hydroxylation and triglyceride transfer. This chain is Protein disulfide-isomerase 2 (pdi2), found in Dictyostelium discoideum (Social amoeba).